Reading from the N-terminus, the 192-residue chain is Ubiquitin-conjugating enzyme E2 1 (192 aa).

Positions 1-28 are disordered; sequence MTTPSRRRLMRDFKKLQEDPPAGVSGAP. Residues 4–150 enclose the UBC core domain; the sequence is PSRRRLMRDF…VQQIVEQSWL (147 aa). Residue C88 is the Glycyl thioester intermediate of the active site. The interval 171-192 is disordered; the sequence is AAPGANDADDDRMDEGASGSNA.

It belongs to the ubiquitin-conjugating enzyme family. Interacts with ubr-1 and rfp-1. Interacts with ubc-13.

The enzyme catalyses S-ubiquitinyl-[E1 ubiquitin-activating enzyme]-L-cysteine + [E2 ubiquitin-conjugating enzyme]-L-cysteine = [E1 ubiquitin-activating enzyme]-L-cysteine + S-ubiquitinyl-[E2 ubiquitin-conjugating enzyme]-L-cysteine.. Its pathway is protein modification; protein ubiquitination. Catalyzes the covalent attachment of ubiquitin to other proteins. This Caenorhabditis elegans protein is Ubiquitin-conjugating enzyme E2 1 (ubc-1).